The sequence spans 267 residues: Thiamine pyrophosphokinase 2 (267 aa).

The protein belongs to the thiamine pyrophosphokinase family. Expressed in leaves and at lower levels in flowers.

The protein resides in the cytoplasm. The protein localises to the cytosol. The catalysed reaction is thiamine + ATP = thiamine diphosphate + AMP + H(+). The protein operates within cofactor biosynthesis; thiamine diphosphate biosynthesis; thiamine diphosphate from thiamine: step 1/1. Catalyzes the phosphorylation of thiamine to thiamine pyrophosphate (TPP). TPP is an active cofactor for enzymes involved in glycolysis and energy production. Plant leaves require high levels of TPP for photosynthesis and carbohydrate metabolism. The sequence is that of Thiamine pyrophosphokinase 2 from Arabidopsis thaliana (Mouse-ear cress).